Reading from the N-terminus, the 355-residue chain is Cell surface glycoprotein CD200 receptor 1 (355 aa).

The N-terminal stretch at Met-1 to Ser-26 is a signal peptide. Residues Ala-27–Lys-267 are Extracellular-facing. Residues Ser-35–Ser-55 are compositionally biased toward polar residues. The interval Ser-35 to Thr-56 is disordered. Residues Asn-46, Asn-123, and Asn-153 are each glycosylated (N-linked (GlcNAc...) asparagine). 4 disulfides stabilise this stretch: Cys-85–Cys-156, Cys-108–Cys-124, Cys-191–Cys-241, and Cys-210–Cys-229. An Ig-like C2-type domain is found at Pro-139–Ser-257. The chain crosses the membrane as a helical span at residues Asn-268–Leu-288. The Cytoplasmic segment spans residues Lys-289–Val-355.

This sequence belongs to the CD200R family. In terms of assembly, CD200 and CD200R1 interact via their respective N-terminal Ig-like domains.

The protein localises to the cell membrane. In terms of biological role, inhibitory receptor for the CD200/OX2 cell surface glycoprotein. Limits inflammation by inhibiting the expression of pro-inflammatory molecules including TNF-alpha, interferons, and inducible nitric oxide synthase (iNOS) in response to selected stimuli. This chain is Cell surface glycoprotein CD200 receptor 1 (CD200R1), found in Bos taurus (Bovine).